A 106-amino-acid chain; its full sequence is Cell division protein FtsL (106 aa).

Residues Met1–Arg22 lie on the Cytoplasmic side of the membrane. Residues Val23–His43 traverse the membrane as a helical segment. Residues His44–Lys106 are Periplasmic-facing.

Belongs to the FtsL family. As to quaternary structure, part of a complex composed of FtsB, FtsL and FtsQ.

It is found in the cell inner membrane. Its function is as follows. Essential cell division protein. May link together the upstream cell division proteins, which are predominantly cytoplasmic, with the downstream cell division proteins, which are predominantly periplasmic. The chain is Cell division protein FtsL from Vibrio cholerae serotype O1 (strain ATCC 39315 / El Tor Inaba N16961).